A 233-amino-acid polypeptide reads, in one-letter code: 5'-methylthioadenosine/S-adenosylhomocysteine nucleosidase (233 aa).

Glutamate 12 functions as the Proton acceptor in the catalytic mechanism. Substrate is bound by residues glycine 78, isoleucine 156, and 177-178; that span reads ME. Aspartate 201 serves as the catalytic Proton donor.

Belongs to the PNP/UDP phosphorylase family. MtnN subfamily.

It catalyses the reaction S-adenosyl-L-homocysteine + H2O = S-(5-deoxy-D-ribos-5-yl)-L-homocysteine + adenine. It carries out the reaction S-methyl-5'-thioadenosine + H2O = 5-(methylsulfanyl)-D-ribose + adenine. The enzyme catalyses 5'-deoxyadenosine + H2O = 5-deoxy-D-ribose + adenine. It functions in the pathway amino-acid biosynthesis; L-methionine biosynthesis via salvage pathway; S-methyl-5-thio-alpha-D-ribose 1-phosphate from S-methyl-5'-thioadenosine (hydrolase route): step 1/2. In terms of biological role, catalyzes the irreversible cleavage of the glycosidic bond in both 5'-methylthioadenosine (MTA) and S-adenosylhomocysteine (SAH/AdoHcy) to adenine and the corresponding thioribose, 5'-methylthioribose and S-ribosylhomocysteine, respectively. Also cleaves 5'-deoxyadenosine, a toxic by-product of radical S-adenosylmethionine (SAM) enzymes, into 5-deoxyribose and adenine. This is 5'-methylthioadenosine/S-adenosylhomocysteine nucleosidase from Listeria monocytogenes serotype 4a (strain HCC23).